A 309-amino-acid polypeptide reads, in one-letter code: (S)-sulfolactate dehydrogenase (309 aa).

NAD(+)-binding positions include 151–152 (GI), aspartate 171, 231–233 (TAR), and aspartate 257. The active site involves arginine 233. Glutamate 262 is a catalytic residue. Residue histidine 281 is the Proton donor of the active site. 281-284 (HIAG) is an NAD(+) binding site.

This sequence belongs to the D-isomer specific 2-hydroxyacid dehydrogenase family.

It catalyses the reaction (2S)-3-sulfolactate + NAD(+) = 3-sulfopyruvate + NADH + H(+). In terms of biological role, dehydrogenase of the (R,S)-sulfolactate degradation pathway that only acts on the (S)-enantiomer of 3-sulfolactate. Together with ComC, provides a racemase system that converts (2S)-3-sulfolactate to (2R)-3-sulfolactate, which is degraded further by (2R)-sulfolactate sulfo-lyase. Specific for NAD. Also able to form sulfolactate from sulfopyruvate. The sequence is that of (S)-sulfolactate dehydrogenase (slcC) from Chromohalobacter salexigens (strain ATCC BAA-138 / DSM 3043 / CIP 106854 / NCIMB 13768 / 1H11).